The sequence spans 141 residues: MLTADDKKILAQLWEKVAGHQDEFGNEALERMFVTYPQTKTYFPHFDLHPGSEQVRSHGKKVAAALSNAVKSIDNLSQALSELSNLHAYNLRVDPANFKLLSQCFQVVLAVHLGKDYTPEMHAAFDKFLSAVAAVLAEKYR.

In terms of domain architecture, Globin spans 1–141 (MLTADDKKIL…VAAVLAEKYR (141 aa)). Residues histidine 58 and histidine 87 each contribute to the heme b site.

It belongs to the globin family. Heterotetramer of two alpha-D chains and two beta chains. Red blood cells.

Its function is as follows. Involved in oxygen transport from the lung to the various peripheral tissues. This chain is Hemoglobin subunit alpha-D (HBAD), found in Branta canadensis (Canada goose).